A 149-amino-acid chain; its full sequence is Putative pre-16S rRNA nuclease (149 aa).

Belongs to the YqgF nuclease family.

The protein resides in the cytoplasm. Could be a nuclease involved in processing of the 5'-end of pre-16S rRNA. This is Putative pre-16S rRNA nuclease from Synechococcus elongatus (strain ATCC 33912 / PCC 7942 / FACHB-805) (Anacystis nidulans R2).